Here is a 4462-residue protein sequence, read N- to C-terminus: Dynein axonemal heavy chain 17 (4462 aa).

Positions 1–1808 (MTMAPDVRLE…FANICDAQIQ (1808 aa)) are stem. 2 TPR repeats span residues 1019-1052 (TWTD…VSKC) and 1702-1736 (IWWT…QLNV). 4 AAA regions span residues 1809-2030 (YSYE…VLVV), 2090-2311 (KIIK…FGFK), 2417-2665 (ELDP…IFQG), and 2763-3012 (SYNE…ERRY). ATP is bound by residues 1847-1854 (GPAGTGKT), 2128-2135 (GNAGSGKS), 2455-2462 (GNAGTGKS), and 2801-2808 (GVGGSGKQ). 2 coiled-coil regions span residues 3027-3086 (YQNL…LIQV) and 3257-3309 (DVAP…EKIK). The tract at residues 3027–3313 (YQNLLAKKRT…TAEKIKCQQE (287 aa)) is stalk. AAA stretches follow at residues 3405–3632 (LTDD…EIEE) and 3842–4068 (IKNF…VLYN). Residues 4147–4182 (PESPYLYGLHPNAEIGFLTVTSEKLFRTVLEMQPKE) form a TPR 3 repeat.

Belongs to the dynein heavy chain family. Consists of at least two heavy chains and a number of intermediate and light chains. As to expression, expressed in testis. Expressed in spermatozoa (at protein level). Not detected in airway epithelial cells (at protein level).

Its subcellular location is the cytoplasm. It localises to the cytoskeleton. The protein localises to the flagellum axoneme. Its function is as follows. Force generating protein component of the outer dynein arms (ODAs) in the sperm flagellum. Produces force towards the minus ends of microtubules. Dynein has ATPase activity; the force-producing power stroke is thought to occur on release of ADP. Plays a major role in sperm motility, implicated in sperm flagellar assembly and beating. The chain is Dynein axonemal heavy chain 17 from Homo sapiens (Human).